The sequence spans 151 residues: Large ribosomal subunit protein uL13 (151 aa).

The protein belongs to the universal ribosomal protein uL13 family. In terms of assembly, part of the 50S ribosomal subunit.

In terms of biological role, this protein is one of the early assembly proteins of the 50S ribosomal subunit, although it is not seen to bind rRNA by itself. It is important during the early stages of 50S assembly. This Picosynechococcus sp. (strain ATCC 27264 / PCC 7002 / PR-6) (Agmenellum quadruplicatum) protein is Large ribosomal subunit protein uL13.